The chain runs to 285 residues: Mitochondrial substrate carrier family protein L (285 aa).

At 1-13 the chain is on the mitochondrial intermembrane side; sequence MIASKETKEKIRN. 3 Solcar repeats span residues 8–94, 103–185, and 193–282; these read KEKI…VKSK, ISLG…AQRY, and MTMG…VMKF. The chain crosses the membrane as a helical span at residues 14–34; the sequence is FIGGFASGAASTLAGHPFDTL. Topologically, residues 35–69 are mitochondrial matrix; that stretch reads KVRLQTEGSTGRFRGLAHCFTTTIKEEGFFALYKG. The helical transmembrane segment at 70 to 90 threads the bilayer; sequence VTPPLLGMSIINSCMFGAMNI. Topologically, residues 91 to 102 are mitochondrial intermembrane; the sequence is VKSKIHTDKSTP. Residues 103-123 traverse the membrane as a helical segment; sequence ISLGEIMVSGAITGWIVSFVA. The Mitochondrial matrix portion of the chain corresponds to 124-156; it reads CPIETVKSKLQVQYTGVKLYNGPIDCIKKIGIR. Residues 157 to 177 form a helical membrane-spanning segment; that stretch reads GLYKALIPTGFQRNSLYAYFG. Residues 178–198 are Mitochondrial intermembrane-facing; sequence CYELAQRYLRREDGSMTMGRS. Residues 199–219 form a helical membrane-spanning segment; sequence FIAGGIAGTGFWLTNFPFDVI. Topologically, residues 220-256 are mitochondrial matrix; the sequence is RSRIMTMPYNESPPRYKGMIDCAKHIYRVDGLKGFWK. A helical transmembrane segment spans residues 257–277; sequence GFSPCLLRTFPANGATFVAYE. Topologically, residues 278–285 are mitochondrial intermembrane; that stretch reads CVMKFFPM.

Belongs to the mitochondrial carrier (TC 2.A.29) family.

It is found in the mitochondrion inner membrane. In terms of biological role, mitochondrial solute carriers shuttle metabolites, nucleotides, and cofactors through the mitochondrial inner membrane. In Dictyostelium discoideum (Social amoeba), this protein is Mitochondrial substrate carrier family protein L (mcfL).